The following is a 129-amino-acid chain: Glycine cleavage system H protein (129 aa).

Residues 24-106 (TYTVGITEHA…YTDGWIFKIK (83 aa)) enclose the Lipoyl-binding domain. Lys65 carries the N6-lipoyllysine modification.

It belongs to the GcvH family. The glycine cleavage system is composed of four proteins: P, T, L and H. (R)-lipoate is required as a cofactor.

Its function is as follows. The glycine cleavage system catalyzes the degradation of glycine. The H protein shuttles the methylamine group of glycine from the P protein to the T protein. This chain is Glycine cleavage system H protein, found in Klebsiella pneumoniae subsp. pneumoniae (strain ATCC 700721 / MGH 78578).